We begin with the raw amino-acid sequence, 401 residues long: MLSPTNSTSKTAPVPPRDSSKPVLISEEPRNQLLQKVARTALAVLLVVVTLGLILLFYSFSDLQSFPWCCQTHPSTKEQPTISIPVPLPSPPLAVPRPSTPPPPVISRPSTPSAPKPSTPPPLLPKAPKPVKTQEDLLPLVPEQVFVEMYEDMARRQTIEALVPAWDSDIIFKCLCYFHTLYPGLIPLETFPPATIFNFKQKIISILEDKKAVLRGEPIKGPLPICCSKENYRRHLQRTTLLPVFMWYHPTPKTLSDTMQTMKQLAIKGSVGASHWLLVIVDIQARRLVYFDSLYNYVMPPENMKKELQSFAQQLDQVYPAYDSKKFSVKIAAKEVIQRGSGSSCGAWCCQFLHWYLKDPLTDALNDLPVDSVERHENLASFVQACEAAVQDLPELSWPEA.

Positions 1 to 11 (MLSPTNSTSKT) are enriched in polar residues. The segment at 1 to 24 (MLSPTNSTSKTAPVPPRDSSKPVL) is disordered. Residues 40–60 (TALAVLLVVVTLGLILLFYSF) traverse the membrane as a helical segment. The disordered stretch occupies residues 77–130 (KEQPTISIPVPLPSPPLAVPRPSTPPPPVISRPSTPSAPKPSTPPPLLPKAPKP). Residues 86–128 (VPLPSPPLAVPRPSTPPPPVISRPSTPSAPKPSTPPPLLPKAP) are compositionally biased toward pro residues. Residues H275, D292, and C345 contribute to the active site.

Belongs to the peptidase C48 family. In terms of assembly, binds to host NFKBIA.

It is found in the secreted. The protein resides in the host cell. Its subcellular location is the membrane. Functionally, effector proteins function to alter host cell physiology and promote bacterial survival in host tissues. This protease possesses deubiquitinating and deneddylating activities. Impairs ubiquitination and degradation of NF-kappa-B inhibitor alpha (NFKBIA), thereby preventing NF-kappa-B activation. The polypeptide is Deubiquitinase and deneddylase Dub1 (cdu1) (Chlamydia trachomatis serovar L2 (strain ATCC VR-902B / DSM 19102 / 434/Bu)).